The following is a 711-amino-acid chain: Hydroperoxide isomerase ALOXE3 (711 aa).

The 118-residue stretch at 2–119 folds into the PLAT domain; the sequence is AVYRLCVTTG…TVELRPGTAR (118 aa). Residues 120 to 711 enclose the Lipoxygenase domain; that stretch reads TICQDSLPLL…PPLIENSVSI (592 aa). 5 residues coordinate Fe cation: His-408, His-413, His-588, Asn-592, and Ile-711.

It belongs to the lipoxygenase family. Requires Fe cation as cofactor. In terms of tissue distribution, skin specific.

The protein resides in the cytoplasm. The catalysed reaction is a hydroperoxyeicosatetraenoate = a hydroxy-epoxy-eicosatetraenoate. It carries out the reaction (8S)-hydroperoxy-(5Z,9E,11Z,14Z)-eicosatetraenoate = (10R)-hydroxy-(8S,9S)-epoxy-(5Z,11Z,14Z)-eicosatrienoate. It catalyses the reaction (12R)-hydroperoxy-(5Z,8Z,10E,14Z)-eicosatetraenoate = (8R)-hydroxy-(11R,12R)-epoxy-(5Z,9E,14Z)-eicosatrienoate. The enzyme catalyses (12S)-hydroperoxy-(5Z,8Z,10E,14Z)-eicosatetraenoate = (8R)-hydroxy-(11S,12S)-epoxy-(5Z,9E,14Z)-eicosatrienoate. The catalysed reaction is (12S)-hydroperoxy-(5Z,8Z,10E,14Z)-eicosatetraenoate = (10R)-hydroxy-(11S,12S)-epoxy-(5Z,8Z,14Z)-eicosatrienoate. It carries out the reaction (15S)-hydroperoxy-(5Z,8Z,11Z,13E)-eicosatetraenoate = (13R)-hydroxy-(14S,15S)-epoxy-(5Z,8Z,11Z)-eicosatrienoate. It catalyses the reaction (13S)-hydroperoxy-(9Z,11E)-octadecadienoate = 11-hydroxy-(12S,13S)-epoxy-(9Z)-octadecenoate. The enzyme catalyses (5S)-hydroperoxy-(6E,8Z,11Z,14Z)-eicosatetraenoate = 7R-hydroxy-5S,6S-epoxy-(8Z,11Z,14Z)-eicosatrienoate. The catalysed reaction is N-[omega-(9R)-hydroperoxy-(10E,12Z)-octadecadienoyloxy]acyl-beta-D-glucosyl-(1&lt;-&gt;1)-octadecasphing-4E-enine = a N-[omega-(9R,10R)-epoxy-(13R)-hydroxy-(11E)-octadecenoyloxy]acyl-beta-D-glucosyl-(1&lt;-&gt;1)-sphing-4E-enine. It carries out the reaction a N-[omega-(9R)-hydroperoxy-(10E,12Z)-octadecadienoyloxy]-acylsphin-4E-enine = a N-[omega-(9R,10R)-epoxy-(13R)-hydroxy-(11E)-octadecenoyloxy]-acylsphing-4E-enine. It catalyses the reaction a hydroperoxyeicosatetraenoate = an oxoeicosatetraenoate + H2O. The enzyme catalyses (8R)-hydroperoxy-(5Z,9E,11Z,14Z)-eicosatetraenoate = 8-oxo-(5Z,9E,11Z,14Z)-eicosatetraenoate + H2O. The catalysed reaction is (8S)-hydroperoxy-(5Z,9E,11Z,14Z)-eicosatetraenoate = 8-oxo-(5Z,9E,11Z,14Z)-eicosatetraenoate + H2O. It carries out the reaction (12R)-hydroperoxy-(5Z,8Z,10E,14Z)-eicosatetraenoate = 12-oxo-(5Z,8Z,10E,14Z)-eicosatetraenoate + H2O. It catalyses the reaction (12S)-hydroperoxy-(5Z,8Z,10E,14Z)-eicosatetraenoate = 12-oxo-(5Z,8Z,10E,14Z)-eicosatetraenoate + H2O. The enzyme catalyses (15S)-hydroperoxy-(5Z,8Z,11Z,13E)-eicosatetraenoate = 15-oxo-(5Z,8Z,11Z,13E)-eicosatetraenoate + H2O. The catalysed reaction is (13S)-hydroperoxy-(9Z,11E)-octadecadienoate = 13-oxo-(9Z,11E)-octadecadienoate + H2O. It participates in lipid metabolism; hydroperoxy eicosatetraenoic acid biosynthesis. The protein operates within lipid metabolism; sphingolipid metabolism. Functionally, non-heme iron-containing lipoxygenase which is atypical in that it displays a prominent hydroperoxide isomerase activity and a reduced lipoxygenases activity. The hydroperoxide isomerase activity catalyzes the isomerization of hydroperoxides, derived from arachidonic and linoleic acid by ALOX12B, into hepoxilin-type epoxyalcohols and ketones. In presence of oxygen, oxygenates polyunsaturated fatty acids, including arachidonic acid, to produce fatty acid hydroperoxides. In the skin, acts downstream of ALOX12B on the linoleate moiety of esterified omega-hydroxyacyl-sphingosine (EOS) ceramides to produce an epoxy-ketone derivative, a crucial step in the conjugation of omega-hydroxyceramide to membrane proteins. Therefore plays a crucial role in the synthesis of corneocytes lipid envelope and the establishment of the skin barrier to water loss. In parallel, it may have a signaling function in barrier formation through the production of hepoxilins metabolites. Also plays a role in adipocyte differentiation through hepoxilin A3 and hepoxilin B3 production which in turn activate PPARG. Through the production of hepoxilins in the spinal cord, it may regulate inflammatory tactile allodynia. This chain is Hydroperoxide isomerase ALOXE3, found in Mus musculus (Mouse).